Consider the following 124-residue polypeptide: Large ribosomal subunit protein eL22 (124 aa).

The protein belongs to the eukaryotic ribosomal protein eL22 family. In terms of assembly, component of the large ribosomal subunit. Mature ribosomes consist of a small (40S) and a large (60S) subunit. The 40S subunit contains about 32 different proteins and 1 molecule of RNA (18S). The 60S subunit contains 45 different proteins and 3 molecules of RNA (25S, 5.8S and 5S).

It is found in the cytoplasm. Functionally, component of the ribosome, a large ribonucleoprotein complex responsible for the synthesis of proteins in the cell. The small ribosomal subunit (SSU) binds messenger RNAs (mRNAs) and translates the encoded message by selecting cognate aminoacyl-transfer RNA (tRNA) molecules. The large subunit (LSU) contains the ribosomal catalytic site termed the peptidyl transferase center (PTC), which catalyzes the formation of peptide bonds, thereby polymerizing the amino acids delivered by tRNAs into a polypeptide chain. The nascent polypeptides leave the ribosome through a tunnel in the LSU and interact with protein factors that function in enzymatic processing, targeting, and the membrane insertion of nascent chains at the exit of the ribosomal tunnel. The sequence is that of Large ribosomal subunit protein eL22 from Candida albicans (strain SC5314 / ATCC MYA-2876) (Yeast).